Reading from the N-terminus, the 859-residue chain is Mismatch repair endonuclease PMS2 (859 aa).

Asparagine 45, aspartate 70, glutamate 109, alanine 110, and leucine 111 together coordinate ATP. Disordered stretches follow at residues 391-413, 427-455, and 469-555; these read ELEKPVPGKQDNSPSLKSTADEK, LHPTKEIKSRGPETAELTRSFPSEKRGVL, and RGSQ…KPED. Basic and acidic residues-rich tracts occupy residues 427-439 and 485-495; these read LHPTKEIKSRGPE and CMDREKIEKDS. Polar residues predominate over residues 512 to 525; it reads EVASSFSSDYNVSS. The Nuclear localization signal motif lies at 574 to 577; that stretch reads KRFK. A disordered region spans residues 578–597; it reads TEERPSNVNISQRLPGPQST. Residues 583-597 show a composition bias toward polar residues; it reads SNVNISQRLPGPQST.

Belongs to the DNA mismatch repair MutL/HexB family. Heterodimer of PMS2 and MLH1 (MutL alpha); this interaction is required for the stability of both partners. Forms a ternary complex with MutS alpha (MSH2-MSH6) or MutS beta (MSH2-MSH3). Part of the BRCA1-associated genome surveillance complex (BASC), which contains BRCA1, MSH2, MSH6, MLH1, ATM, BLM, PMS2 and the RAD50-MRE11-NBS1 protein complex. This association could be a dynamic process changing throughout the cell cycle and within subnuclear domains. Interacts with MTMR15/FAN1.

Its subcellular location is the nucleus. It carries out the reaction ATP + H2O = ADP + phosphate + H(+). In terms of biological role, component of the post-replicative DNA mismatch repair system (MMR). Heterodimerizes with MLH1 to form MutL alpha. DNA repair is initiated by MutS alpha (MSH2-MSH6) or MutS beta (MSH2-MSH3) binding to a dsDNA mismatch, then MutL alpha is recruited to the heteroduplex. Assembly of the MutL-MutS-heteroduplex ternary complex in presence of RFC and PCNA is sufficient to activate endonuclease activity of PMS2. It introduces single-strand breaks near the mismatch and thus generates new entry points for the exonuclease EXO1 to degrade the strand containing the mismatch. DNA methylation would prevent cleavage and therefore assure that only the newly mutated DNA strand is going to be corrected. MutL alpha (MLH1-PMS2) interacts physically with the clamp loader subunits of DNA polymerase III, suggesting that it may play a role to recruit the DNA polymerase III to the site of the MMR. Also implicated in DNA damage signaling, a process which induces cell cycle arrest and can lead to apoptosis in case of major DNA damages. Possesses an ATPase activity, but in the absence of gross structural changes, ATP hydrolysis may not be necessary for proficient mismatch repair. The sequence is that of Mismatch repair endonuclease PMS2 from Mus musculus (Mouse).